The primary structure comprises 608 residues: 1-deoxy-D-xylulose-5-phosphate synthase (608 aa).

Thiamine diphosphate contacts are provided by residues histidine 66 and 107–109 (GHA). Aspartate 138 serves as a coordination point for Mg(2+). Thiamine diphosphate is bound by residues 139-140 (GA), asparagine 167, phenylalanine 277, and glutamate 350. Position 167 (asparagine 167) interacts with Mg(2+).

This sequence belongs to the transketolase family. DXPS subfamily. Homodimer. Mg(2+) serves as cofactor. The cofactor is thiamine diphosphate.

The enzyme catalyses D-glyceraldehyde 3-phosphate + pyruvate + H(+) = 1-deoxy-D-xylulose 5-phosphate + CO2. Its pathway is metabolic intermediate biosynthesis; 1-deoxy-D-xylulose 5-phosphate biosynthesis; 1-deoxy-D-xylulose 5-phosphate from D-glyceraldehyde 3-phosphate and pyruvate: step 1/1. Functionally, catalyzes the acyloin condensation reaction between C atoms 2 and 3 of pyruvate and glyceraldehyde 3-phosphate to yield 1-deoxy-D-xylulose-5-phosphate (DXP). The polypeptide is 1-deoxy-D-xylulose-5-phosphate synthase (Thermotoga maritima (strain ATCC 43589 / DSM 3109 / JCM 10099 / NBRC 100826 / MSB8)).